The sequence spans 273 residues: NADH-ubiquinone oxidoreductase 29.9 kDa subunit, mitochondrial (273 aa).

Residues 1–8 (MRAALRLL) constitute a mitochondrion transit peptide.

Belongs to the complex I NDUFA5 subunit family. As to quaternary structure, complex I is composed of about 40 different subunits.

The protein localises to the mitochondrion inner membrane. Its function is as follows. Accessory subunit of the mitochondrial membrane respiratory chain NADH dehydrogenase (Complex I), that is believed not to be involved in catalysis. Complex I functions in the transfer of electrons from NADH to the respiratory chain. The immediate electron acceptor for the enzyme is believed to be ubiquinone. This is NADH-ubiquinone oxidoreductase 29.9 kDa subunit, mitochondrial (nuo-32) from Neurospora crassa (strain ATCC 24698 / 74-OR23-1A / CBS 708.71 / DSM 1257 / FGSC 987).